A 440-amino-acid polypeptide reads, in one-letter code: GTPase Der (440 aa).

2 EngA-type G domains span residues 4 to 168 (PIVA…PENK) and 177 to 352 (IKVA…NQRA). Residues 10–17 (GRPNVGKS), 57–61 (DTGGI), 120–123 (NKVD), 183–190 (GKPNVGKS), 230–234 (DTAGL), and 295–298 (NKWD) contribute to the GTP site. Residues 353–437 (MRVPTGGLNE…PIRFIYREKS (85 aa)) form the KH-like domain.

This sequence belongs to the TRAFAC class TrmE-Era-EngA-EngB-Septin-like GTPase superfamily. EngA (Der) GTPase family. As to quaternary structure, associates with the 50S ribosomal subunit.

Functionally, GTPase that plays an essential role in the late steps of ribosome biogenesis. The polypeptide is GTPase Der (Alkaliphilus metalliredigens (strain QYMF)).